The primary structure comprises 394 residues: Acetate kinase 1 (394 aa).

Asn-8 contacts Mg(2+). Lys-15 is an ATP binding site. Position 90 (Arg-90) interacts with substrate. Residue Asp-147 is the Proton donor/acceptor of the active site. ATP contacts are provided by residues 207–211 (HLGSG) and 282–284 (DMR). Glu-382 lines the Mg(2+) pocket.

It belongs to the acetokinase family. In terms of assembly, homodimer. Mg(2+) serves as cofactor. It depends on Mn(2+) as a cofactor.

It is found in the cytoplasm. It carries out the reaction acetate + ATP = acetyl phosphate + ADP. Its pathway is metabolic intermediate biosynthesis; acetyl-CoA biosynthesis; acetyl-CoA from acetate: step 1/2. Functionally, catalyzes the formation of acetyl phosphate from acetate and ATP. Can also catalyze the reverse reaction. The polypeptide is Acetate kinase 1 (Latilactobacillus sakei subsp. sakei (strain 23K) (Lactobacillus sakei subsp. sakei)).